The chain runs to 141 residues: ATP synthase F(0) complex subunit C2, mitochondrial (141 aa).

The N-terminal 66 residues, 1 to 66 (MFACSKFVST…RSFQTSAISR (66 aa)), are a transit peptide targeting the mitochondrion. A helical transmembrane segment spans residues 82 to 102 (VGVAGSGAGIGTVFGSLIIGY). Residue Lys-109 is modified to N6,N6,N6-trimethyllysine. A helical transmembrane segment spans residues 117-137 (ILGFALSEAMGLFCLMVAFLI).

This sequence belongs to the ATPase C chain family. In terms of assembly, F-type ATPases have 2 components, CF(1) - the catalytic core - and CF(0) - the membrane proton channel. CF(1) has five subunits: alpha(3), beta(3), gamma(1), delta(1), epsilon(1). CF(0) has three main subunits: a, b and c. Interacts with DNAJC30; interaction is direct. Trimethylated by ATPSCKMT at Lys-109. Methylation is required for proper incorporation of the C subunit into the ATP synthase complex and mitochondrial respiration.

It is found in the mitochondrion membrane. Mitochondrial membrane ATP synthase (F(1)F(0) ATP synthase or Complex V) produces ATP from ADP in the presence of a proton gradient across the membrane which is generated by electron transport complexes of the respiratory chain. F-type ATPases consist of two structural domains, F(1) - containing the extramembraneous catalytic core and F(0) - containing the membrane proton channel, linked together by a central stalk and a peripheral stalk. During catalysis, ATP synthesis in the catalytic domain of F(1) is coupled via a rotary mechanism of the central stalk subunits to proton translocation. Part of the complex F(0) domain. A homomeric c-ring of probably 10 subunits is part of the complex rotary element. The protein is ATP synthase F(0) complex subunit C2, mitochondrial of Homo sapiens (Human).